A 355-amino-acid chain; its full sequence is Phosphoribosylformylglycinamidine cyclo-ligase (355 aa).

This sequence belongs to the AIR synthase family.

The protein resides in the cytoplasm. The catalysed reaction is 2-formamido-N(1)-(5-O-phospho-beta-D-ribosyl)acetamidine + ATP = 5-amino-1-(5-phospho-beta-D-ribosyl)imidazole + ADP + phosphate + H(+). It participates in purine metabolism; IMP biosynthesis via de novo pathway; 5-amino-1-(5-phospho-D-ribosyl)imidazole from N(2)-formyl-N(1)-(5-phospho-D-ribosyl)glycinamide: step 2/2. The polypeptide is Phosphoribosylformylglycinamidine cyclo-ligase (Methylobacterium nodulans (strain LMG 21967 / CNCM I-2342 / ORS 2060)).